Reading from the N-terminus, the 129-residue chain is Small ribosomal subunit protein uS11 (129 aa).

The protein belongs to the universal ribosomal protein uS11 family. In terms of assembly, part of the 30S ribosomal subunit. Interacts with proteins S7 and S18. Binds to IF-3.

Functionally, located on the platform of the 30S subunit, it bridges several disparate RNA helices of the 16S rRNA. Forms part of the Shine-Dalgarno cleft in the 70S ribosome. This Bacteroides thetaiotaomicron (strain ATCC 29148 / DSM 2079 / JCM 5827 / CCUG 10774 / NCTC 10582 / VPI-5482 / E50) protein is Small ribosomal subunit protein uS11.